Consider the following 47-residue polypeptide: Protein 0.5 (47 aa).

The first 23 residues, 1-23, serve as a signal peptide directing secretion; that stretch reads MYMLTIGLLTALGLAVGASFGKA. A helical transmembrane segment spans residues 24 to 43; the sequence is LGVAVGSYFTACIIIGIIKG.

The protein localises to the host membrane. This is Protein 0.5 from Escherichia phage T7 (Bacteriophage T7).